Reading from the N-terminus, the 515-residue chain is Endoglucanase 23 (515 aa).

The N-terminal stretch at 1 to 29 (MALLSAPVRRRRSRVRVLLVCCCLLLALA) is a signal peptide. D95 serves as the catalytic Nucleophile. N-linked (GlcNAc...) asparagine glycosylation is found at N178, N375, and N384. H426 is a catalytic residue. An N-linked (GlcNAc...) asparagine glycan is attached at N452. Catalysis depends on residues D477 and E486.

Belongs to the glycosyl hydrolase 9 (cellulase E) family.

It is found in the secreted. It carries out the reaction Endohydrolysis of (1-&gt;4)-beta-D-glucosidic linkages in cellulose, lichenin and cereal beta-D-glucans.. The chain is Endoglucanase 23 (GLU12) from Oryza sativa subsp. japonica (Rice).